The sequence spans 451 residues: Phosphoglucosamine mutase (451 aa).

S102 acts as the Phosphoserine intermediate in catalysis. Mg(2+)-binding residues include S102, D243, D245, and D247. Residue S102 is modified to Phosphoserine.

This sequence belongs to the phosphohexose mutase family. The cofactor is Mg(2+). In terms of processing, activated by phosphorylation.

The catalysed reaction is alpha-D-glucosamine 1-phosphate = D-glucosamine 6-phosphate. Functionally, catalyzes the conversion of glucosamine-6-phosphate to glucosamine-1-phosphate. The polypeptide is Phosphoglucosamine mutase (Salinispora tropica (strain ATCC BAA-916 / DSM 44818 / JCM 13857 / NBRC 105044 / CNB-440)).